The chain runs to 181 residues: Transcriptional repressor NrdR (181 aa).

The segment at 3–34 (CLFCQHTYTRVIDSRVSEDGATIRRRRECEAC) is a zinc-finger region. Residues 49 to 139 (PVIIKKDGGR…VYRSFQDVAD (91 aa)) form the ATP-cone domain.

The protein belongs to the NrdR family. Zn(2+) serves as cofactor.

In terms of biological role, negatively regulates transcription of bacterial ribonucleotide reductase nrd genes and operons by binding to NrdR-boxes. The sequence is that of Transcriptional repressor NrdR from Xylella fastidiosa (strain 9a5c).